Here is a 137-residue protein sequence, read N- to C-terminus: Glutamate mutase sigma subunit (137 aa).

The B12-binding domain maps to 3–137 (KKTIVLGVIG…ADMKEVLGVE (135 aa)). Residues 13–17 (SDCHA), H16, 61–63 (SSL), and 93–97 (NIVVG) each bind adenosylcob(III)alamin.

The protein belongs to the methylaspartate mutase GlmS subunit family. Heterotetramer composed of 2 epsilon subunits (GlmE) and 2 sigma subunits (GlmS). GlmE exists as a homodimer and GlmS as a monomer. Adenosylcob(III)alamin is required as a cofactor.

The enzyme catalyses (2S,3S)-3-methyl-L-aspartate = L-glutamate. The protein operates within amino-acid degradation; L-glutamate degradation via mesaconate pathway; acetate and pyruvate from L-glutamate: step 1/4. In terms of biological role, catalyzes the carbon skeleton rearrangement of L-glutamate to L-threo-3-methylaspartate ((2S,3S)-3-methylaspartate). This chain is Glutamate mutase sigma subunit, found in Clostridium tetanomorphum.